Reading from the N-terminus, the 383-residue chain is tRNA (guanine-N(7)-)-methyltransferase non-catalytic subunit wuho (383 aa).

WD repeat units follow at residues N61–L101, A105–K144, G148–S187, G191–Q231, and A289–S329.

It belongs to the WD repeat TRM82 family. Forms a heterodimer with the catalytic subunit Mettl1. Interacts with mei-P26 and weakly interacts with bgcn; required for the function or formation of the mei-P26-bgcn-bam-sxl complex. Interacts with nanos; may be involved in mei-P26-dependent derepression of the BMP signaling pathway. Interacts with Myc; the interaction may be mediated by mei-P26 and may be involved in the regulation of ribosome biogenesis. As to expression, in testis, it is present at high level in hub cells, a niche for germline stem cells of testis. Ubiquitously expressed in all testicular cells throughout spermatogenesis. Ubiquitously expressed in all germline and somatic cells of the ovary.

It localises to the nucleus. Its subcellular location is the cytoplasm. It participates in tRNA modification; N(7)-methylguanine-tRNA biosynthesis. Its function is as follows. Required for the Mettl1-dependent formation of N(7)-methylguanine at position 46 (m7G46) in tRNA. In the Mettl1-wuho methyltransferase complex, it is required to stabilize and induce conformational changes of the catalytic subunit. Required for binding of nanos mRNA and repression of translation by the mei-P26-bgcn-bam-sxl complex. May cooperate with mei-P26 and nanos to derepress the BMP signaling pathway. May cooperate with mei-P26 to suppress expression of a subset of microRNAs. May cooperate with mei-P26 to regulate bam expression levels in germline cells during gametogenesis. Required to promote mitosis to meiosis transition during gametogenesis. May regulate germline cell division in part by regulating ribosome biogenesis. The protein is tRNA (guanine-N(7)-)-methyltransferase non-catalytic subunit wuho of Drosophila mojavensis (Fruit fly).